Consider the following 368-residue polypeptide: Quinolinate synthase (368 aa).

The iminosuccinate site is built by His46 and Ser63. Cys110 provides a ligand contact to [4Fe-4S] cluster. Iminosuccinate is bound by residues 141 to 143 and Ser162; that span reads YVN. Position 230 (Cys230) interacts with [4Fe-4S] cluster. Iminosuccinate-binding positions include 256–258 and Thr273; that span reads HPE. Cys320 contacts [4Fe-4S] cluster.

The protein belongs to the quinolinate synthase family. Type 3 subfamily. [4Fe-4S] cluster is required as a cofactor.

Its subcellular location is the cytoplasm. It carries out the reaction iminosuccinate + dihydroxyacetone phosphate = quinolinate + phosphate + 2 H2O + H(+). It participates in cofactor biosynthesis; NAD(+) biosynthesis; quinolinate from iminoaspartate: step 1/1. In terms of biological role, catalyzes the condensation of iminoaspartate with dihydroxyacetone phosphate to form quinolinate. In Bacillus cereus (strain ATCC 10987 / NRS 248), this protein is Quinolinate synthase.